We begin with the raw amino-acid sequence, 189 residues long: MANYSTSEFKGGLKIMQDGEPCSIVENEMVKPGKGQAFNRVKIRKLISGKVVEKTFKSGESVEGADVIELELSYLYNDGEFWHFMNNETFEQVPADEKAVGEAEKWLVEQDVCTLTLWEGKPINVQPPNFVELEITETDPGLKGDTAGTGGKPATLSTGAVVRVPLFVQIGEVIKVDTRSGEYVSRVQK.

Lysine 34 carries the N6-(3,6-diaminohexanoyl)-5-hydroxylysine modification.

It belongs to the elongation factor P family. In terms of processing, may be beta-lysylated on the epsilon-amino group of Lys-34 by the combined action of EpmA and EpmB, and then hydroxylated on the C5 position of the same residue by EpmC (if this protein is present). Lysylation is critical for the stimulatory effect of EF-P on peptide-bond formation. The lysylation moiety may extend toward the peptidyltransferase center and stabilize the terminal 3-CCA end of the tRNA. Hydroxylation of the C5 position on Lys-34 may allow additional potential stabilizing hydrogen-bond interactions with the P-tRNA.

It is found in the cytoplasm. It participates in protein biosynthesis; polypeptide chain elongation. Involved in peptide bond synthesis. Alleviates ribosome stalling that occurs when 3 or more consecutive Pro residues or the sequence PPG is present in a protein, possibly by augmenting the peptidyl transferase activity of the ribosome. Modification of Lys-34 is required for alleviation. In Idiomarina loihiensis (strain ATCC BAA-735 / DSM 15497 / L2-TR), this protein is Elongation factor P.